We begin with the raw amino-acid sequence, 74 residues long: MPVQRKRRIKLCPLCADGVREVDYKDVNRLRRFTSDRGKILPRRVTGVCAFHQRSLSRAIKRAREMALLPYVMQ.

It belongs to the bacterial ribosomal protein bS18 family. As to quaternary structure, part of the 30S ribosomal subunit. Forms a tight heterodimer with protein bS6.

Binds as a heterodimer with protein bS6 to the central domain of the 16S rRNA, where it helps stabilize the platform of the 30S subunit. The chain is Small ribosomal subunit protein bS18 from Coprothermobacter proteolyticus (strain ATCC 35245 / DSM 5265 / OCM 4 / BT).